The sequence spans 180 residues: Ribosome-recycling factor (180 aa).

It belongs to the RRF family.

Its subcellular location is the cytoplasm. Its function is as follows. Responsible for the release of ribosomes from messenger RNA at the termination of protein biosynthesis. May increase the efficiency of translation by recycling ribosomes from one round of translation to another. This chain is Ribosome-recycling factor, found in Chlamydia felis (strain Fe/C-56) (Chlamydophila felis).